We begin with the raw amino-acid sequence, 484 residues long: Cobyric acid synthase (484 aa).

Residues 248–435 (VLKVIVPVLP…LHGLFEGSQS (188 aa)) enclose the GATase cobBQ-type domain. Residue cysteine 329 is the Nucleophile of the active site. Residue histidine 427 is part of the active site.

It belongs to the CobB/CobQ family. CobQ subfamily.

The protein operates within cofactor biosynthesis; adenosylcobalamin biosynthesis. Catalyzes amidations at positions B, D, E, and G on adenosylcobyrinic A,C-diamide. NH(2) groups are provided by glutamine, and one molecule of ATP is hydrogenolyzed for each amidation. This is Cobyric acid synthase from Pseudomonas putida (strain ATCC 700007 / DSM 6899 / JCM 31910 / BCRC 17059 / LMG 24140 / F1).